We begin with the raw amino-acid sequence, 361 residues long: sn-glycerol-3-phosphate import ATP-binding protein UgpC (361 aa).

Residues 4 to 235 (LSLKGIRKSY…PETVFVAGFI (232 aa)) form the ABC transporter domain. Position 37-44 (37-44 (GPSGCGKS)) interacts with ATP.

Belongs to the ABC transporter superfamily. sn-glycerol-3-phosphate importer (TC 3.A.1.1.3) family. In terms of assembly, the complex is composed of two ATP-binding proteins (UgpC), two transmembrane proteins (UgpA and UgpE) and a solute-binding protein (UgpB).

Its subcellular location is the cell inner membrane. It carries out the reaction sn-glycerol 3-phosphate(out) + ATP + H2O = sn-glycerol 3-phosphate(in) + ADP + phosphate + H(+). Its function is as follows. Part of the ABC transporter complex UgpBAEC involved in sn-glycerol-3-phosphate (G3P) import. Responsible for energy coupling to the transport system. This is sn-glycerol-3-phosphate import ATP-binding protein UgpC from Burkholderia ambifaria (strain ATCC BAA-244 / DSM 16087 / CCUG 44356 / LMG 19182 / AMMD) (Burkholderia cepacia (strain AMMD)).